The primary structure comprises 200 residues: MHKAILNSDLIATKAGDVTVYNYDGETREYISTSNEYLAVGVGIPACSCLDAPGTHKAGYAICRSADFNSWEYVPDHRGETVYSTKTGESKEIKAPGDYPENTTTIAPLSPYDKWDGEKWVTDTEAQHSAAVDAAEAQRQSLIDAAMASISLIQLKLQAGRKLTQAETTRLNAVLDYIDAVTATDTSTAPDVIWPELPEA.

It belongs to the tfa family.

In Escherichia coli (strain K12), this protein is Prophage tail fiber assembly protein homolog TfaE (tfaE).